We begin with the raw amino-acid sequence, 184 residues long: UPF0149 protein PP_5201 (184 aa).

Belongs to the UPF0149 family.

The sequence is that of UPF0149 protein PP_5201 from Pseudomonas putida (strain ATCC 47054 / DSM 6125 / CFBP 8728 / NCIMB 11950 / KT2440).